Reading from the N-terminus, the 90-residue chain is Conotoxin Rg9.1 (90 aa).

Positions 1 to 20 are cleaved as a signal peptide; that stretch reads MHLSLARSAVLILLLLFALG. The propeptide occupies 21-60; sequence NFVGVQPGQITRDADHGINLRSLRKQMSRSPLVKGAFCGQ. Cystine bridges form between cysteine 58-cysteine 71, cysteine 62-cysteine 73, and cysteine 67-cysteine 80.

The protein belongs to the conotoxin P superfamily. In terms of tissue distribution, expressed by the venom duct.

Its subcellular location is the secreted. Functionally, probable neurotoxin that inhibits ion channels. The protein is Conotoxin Rg9.1 of Conus regius (Crown cone).